The sequence spans 469 residues: Solute carrier family 52, riboflavin transporter, member 3 (469 aa).

Residues 1 to 6 are Cytoplasmic-facing; it reads MALLTH. The chain crosses the membrane as a helical span at residues 7–27; the sequence is LLVCTFGMGSWVAINGLWVEL. Residues 28–43 are Extracellular-facing; that stretch reads PLLVTELPEGWYLPSY. The helical transmembrane segment at 44 to 64 threads the bilayer; that stretch reads LTMVIQLANIGPLLVTLLHHF. The Cytoplasmic portion of the chain corresponds to 65–71; the sequence is QPSCLSE. Residues 72–92 traverse the membrane as a helical segment; sequence VPIIFTVLAVGTVACALFAFL. The Extracellular portion of the chain corresponds to 93–105; it reads WNVTSWVLDGRHS. An N-linked (GlcNAc...) asparagine glycan is attached at Asn-94. Residues 106-126 traverse the membrane as a helical segment; it reads IAFMVLTFFLALVDCTSSVTF. Over 127 to 137 the chain is Cytoplasmic; that stretch reads LPFMSRLPACY. The helical transmembrane segment at 138–158 threads the bilayer; that stretch reads LTTFFVGEGLSSLLPALVALA. Residues 159 to 220 lie on the Extracellular side of the membrane; it reads QGSGLTTCVN…SRYLPANFSP (62 aa). N-linked (GlcNAc...) asparagine glycosylation is present at Asn-168. A helical transmembrane segment spans residues 221–241; sequence LVFFLLLSFMMACCLAAFFLL. The Cytoplasmic segment spans residues 242-297; sequence QRQPRPRESSIEDLLTSQVTLHSIRPREGDDLGPPDPGPSSKAQGLPEEKTASDHP. The residue at position 251 (Ser-251) is a Phosphoserine. Residues 266–290 form a disordered region; it reads RPREGDDLGPPDPGPSSKAQGLPEE. The chain crosses the membrane as a helical span at residues 298–318; that stretch reads AHLAFIYVLVAFVNALTNGVL. Residues 319 to 335 lie on the Extracellular side of the membrane; that stretch reads PSVQTYSCLSYGPVAYH. Residues 336 to 356 traverse the membrane as a helical segment; the sequence is LSATLSSMANPLACFLSMFLP. Topologically, residues 357 to 361 are cytoplasmic; the sequence is HRSLP. A helical transmembrane segment spans residues 362 to 382; the sequence is FLGVLTVLGTGFGAYNMAMAV. The Extracellular portion of the chain corresponds to 383–396; sequence MSPCPLMQGHWAGE. The helical transmembrane segment at 397–417 threads the bilayer; it reads ILIVASWVLFIGCLSYVKVML. The Cytoplasmic segment spans residues 418–427; sequence GVILRDRSRS. Residues 428-448 form a helical membrane-spanning segment; it reads ALVWCGAAVQLGSLLGALLMF. The Extracellular portion of the chain corresponds to 449-469; sequence PLVNVLRLFSSADFCSLQCSA.

This sequence belongs to the riboflavin transporter family.

It localises to the cell membrane. The catalysed reaction is riboflavin(in) = riboflavin(out). Plasma membrane transporter mediating the uptake by cells of the water soluble vitamin B2/riboflavin that plays a key role in biochemical oxidation-reduction reactions of the carbohydrate, lipid, and amino acid metabolism. The protein is Solute carrier family 52, riboflavin transporter, member 3 (SLC52A3) of Ailuropoda melanoleuca (Giant panda).